A 1033-amino-acid polypeptide reads, in one-letter code: MAPPDSTHGGSFRDHLKTNDRSSTSKGKQRYSPLQEAIPEEISSFRSPSEYADTDSDSDLERSGSYKLRPVDRYGSHHSSAFIPVIREENGVETYLDSITEAEQELLSASKQYDLVDDDDSSDFDSDEEATLRYRLKDRLKRRRARLQAWQPVKYARIWWRTLLAVVVTLVVVVWGFLSFAVSHREEPTVWPMVPSDSWFPSPKGGTLKHWEESYKKAQSLVRNMTLVEKVNITTGIGWQMGLCVGNTGPADIVKFPSLCLQDGPQGLRFADHVSAFPAGITTGSTWNRELMRERGVAMGREARLKGVNVLLGPSMGPLGMMPAGGRNWEGFGSDPVLQAVAAAETIRGIQSNGVMATAKHFVMNEQEHFRQPFEWGIPTALSSNVGDRALHEVFAWPFAESIRADVASVMCSYQMVNNSHACENSKLLNGILKDELGFQGFVQSDWLAQRSGINSALGGLDMSMPGDGLHWVDGKSLWGSELTRAVLNTSVPVERLNDMVTRIVAAWYHLGQDTWERPPPEGNGGPNFSSWTNDEVGWLHTGSNDGSYARVNHYVDAQGTGPEAHSIIARKVAAEGTVLLKNVDRTLPLSRNASSPSGGILRVGIYGDDAGPALGPNACPDRGCNQGTLATGWGSGTVEFPYLVSPIEALESAWSTEIESTAYLRNAVMPADAVDKDLCLVFVNADSGEGYISAGGIHGDRNDLFLQKGGDTLVRTVSSNCGGGQGKTVVVIHAVGPVVMESWIDLPGVHAVLLANLPGQESGNALVDVLFGEVDASGRLPYTIGKSLEDYGPGAQVLYEPNAPVPQVDFLDALYIDYRHFDRHNITPRFEFGFGLSYTTFELLDLSISPLQQKSRSVPPRPADAVAPPVYDISLPDPASALFPAGFQPVFKYIYPYLSNLDGTAPHNYSFYPKGYNETQRPSPAGGGAGGHPALYEEMVSVKLQVSNTGDRKGQEVVQVYVSFPPDFPERVLRNFTKIELEPSERREVQMTLSRKDLSYWSTREQNWVMPEGKFQIWVGRSSRDLPLMGEY.

The interval 1-71 (MAPPDSTHGG…RSGSYKLRPV (71 aa)) is disordered. Residues 1-161 (MAPPDSTHGG…PVKYARIWWR (161 aa)) lie on the Cytoplasmic side of the membrane. Basic and acidic residues-rich tracts occupy residues 11 to 20 (SFRDHLKTND) and 59 to 71 (DLERSGSYKLRPV). A helical; Signal-anchor for type II membrane protein membrane pass occupies residues 162 to 182 (TLLAVVVTLVVVVWGFLSFAV). Over 183–1033 (SHREEPTVWP…SRDLPLMGEY (851 aa)) the chain is Extracellular. Residues Asn224, Asn232, and Asn418 are each glycosylated (N-linked (GlcNAc...) asparagine). Asp446 is an active-site residue. N-linked (GlcNAc...) asparagine glycosylation is found at Asn489, Asn528, Asn593, Asn909, Asn918, and Asn976.

It belongs to the glycosyl hydrolase 3 family.

The protein localises to the cell membrane. It catalyses the reaction Hydrolysis of terminal, non-reducing beta-D-glucosyl residues with release of beta-D-glucose.. It participates in glycan metabolism; cellulose degradation. In terms of biological role, beta-glucosidases are one of a number of cellulolytic enzymes involved in the degradation of cellulosic biomass. Catalyzes the last step releasing glucose from the inhibitory cellobiose. The sequence is that of Probable beta-glucosidase E (bglE) from Aspergillus fumigatus (strain CBS 144.89 / FGSC A1163 / CEA10) (Neosartorya fumigata).